The following is a 158-amino-acid chain: MTTVIYPGTFDPITNGHMDIIQRSAVLFSKVIVAVAKNPSKQPLFNLAERVELVQLSVVHLGNVEVIGFDDLLANVVKARQIDAIIRGVRTTMDFEYESQLAHLNRLLTNGVESLFLPPTEQWSYVSSTIVRDIFLHQGDVSRLVPAAVLRALEKRAK.

Residue Thr9 coordinates substrate. ATP contacts are provided by residues 9–10 (TF) and His17. The substrate site is built by Lys41, Leu73, and Arg87. ATP contacts are provided by residues 88–90 (GVR), Glu98, and 123–129 (WSYVSST).

The protein belongs to the bacterial CoaD family. As to quaternary structure, homohexamer. Mg(2+) is required as a cofactor.

It localises to the cytoplasm. The enzyme catalyses (R)-4'-phosphopantetheine + ATP + H(+) = 3'-dephospho-CoA + diphosphate. It functions in the pathway cofactor biosynthesis; coenzyme A biosynthesis; CoA from (R)-pantothenate: step 4/5. Reversibly transfers an adenylyl group from ATP to 4'-phosphopantetheine, yielding dephospho-CoA (dPCoA) and pyrophosphate. This chain is Phosphopantetheine adenylyltransferase, found in Histophilus somni (strain 129Pt) (Haemophilus somnus).